Here is a 510-residue protein sequence, read N- to C-terminus: Glutamate--tRNA ligase (510 aa).

A 'HIGH' region motif is present at residues 15–25 (PSPTGDPHVGT). A 'KMSKS' region motif is present at residues 256-260 (KISKR). Residue lysine 259 coordinates ATP.

This sequence belongs to the class-I aminoacyl-tRNA synthetase family. Glutamate--tRNA ligase type 1 subfamily. In terms of assembly, monomer.

It localises to the cytoplasm. The catalysed reaction is tRNA(Glu) + L-glutamate + ATP = L-glutamyl-tRNA(Glu) + AMP + diphosphate. In terms of biological role, catalyzes the attachment of glutamate to tRNA(Glu) in a two-step reaction: glutamate is first activated by ATP to form Glu-AMP and then transferred to the acceptor end of tRNA(Glu). This Fusobacterium nucleatum subsp. nucleatum (strain ATCC 25586 / DSM 15643 / BCRC 10681 / CIP 101130 / JCM 8532 / KCTC 2640 / LMG 13131 / VPI 4355) protein is Glutamate--tRNA ligase.